A 293-amino-acid chain; its full sequence is Porphobilinogen deaminase (293 aa).

Cys235 is subject to S-(dipyrrolylmethanemethyl)cysteine.

It belongs to the HMBS family. Monomer. The cofactor is dipyrromethane.

The catalysed reaction is 4 porphobilinogen + H2O = hydroxymethylbilane + 4 NH4(+). Its pathway is porphyrin-containing compound metabolism; protoporphyrin-IX biosynthesis; coproporphyrinogen-III from 5-aminolevulinate: step 2/4. Tetrapolymerization of the monopyrrole PBG into the hydroxymethylbilane pre-uroporphyrinogen in several discrete steps. The sequence is that of Porphobilinogen deaminase from Ruminiclostridium cellulolyticum (strain ATCC 35319 / DSM 5812 / JCM 6584 / H10) (Clostridium cellulolyticum).